Reading from the N-terminus, the 102-residue chain is MRMLVFFDLPVVSKADRRAYTVFRRFLLNDGYDMIQFSVYGRILNGTDAAQKHMQRLLANLPSEGSVRVLTVTEKQFASMKLLVGLPLFQEKKVNAAQIALF.

Position 8 (Asp8) interacts with Mg(2+).

This sequence belongs to the CRISPR-associated endoribonuclease Cas2 protein family. As to quaternary structure, homodimer, forms a heterotetramer with a Cas1 homodimer. Requires Mg(2+) as cofactor.

Functionally, CRISPR (clustered regularly interspaced short palindromic repeat), is an adaptive immune system that provides protection against mobile genetic elements (viruses, transposable elements and conjugative plasmids). CRISPR clusters contain sequences complementary to antecedent mobile elements and target invading nucleic acids. CRISPR clusters are transcribed and processed into CRISPR RNA (crRNA). Functions as a ssRNA-specific endoribonuclease. Involved in the integration of spacer DNA into the CRISPR cassette. This chain is CRISPR-associated endoribonuclease Cas2, found in Acidovorax ebreus (strain TPSY) (Diaphorobacter sp. (strain TPSY)).